Reading from the N-terminus, the 551-residue chain is Methionine--tRNA ligase (551 aa).

Residues 12-22 carry the 'HIGH' region motif; sequence PYANGPLHFGH. Cys144, Cys147, Cys157, and Cys160 together coordinate Zn(2+). The 'KMSKS' region motif lies at 330 to 334; sequence QFSKS. Lys333 contacts ATP.

It belongs to the class-I aminoacyl-tRNA synthetase family. MetG type 1 subfamily. In terms of assembly, monomer. Zn(2+) is required as a cofactor.

Its subcellular location is the cytoplasm. It carries out the reaction tRNA(Met) + L-methionine + ATP = L-methionyl-tRNA(Met) + AMP + diphosphate. In terms of biological role, is required not only for elongation of protein synthesis but also for the initiation of all mRNA translation through initiator tRNA(fMet) aminoacylation. This is Methionine--tRNA ligase from Chlamydia abortus (strain DSM 27085 / S26/3) (Chlamydophila abortus).